A 404-amino-acid polypeptide reads, in one-letter code: D-galactonate dehydratase family member Ent638_1932 (404 aa).

Residues Asn-37 and His-122 each contribute to the substrate site. Catalysis depends on Tyr-159, which acts as the Proton donor/acceptor. Residue Asp-212 participates in Mg(2+) binding. His-214 (proton donor/acceptor) is an active-site residue. Positions 238 and 264 each coordinate Mg(2+). Substrate is bound by residues Glu-264, Arg-285, His-314, Asp-318, and Glu-341.

This sequence belongs to the mandelate racemase/muconate lactonizing enzyme family. GalD subfamily. The cofactor is Mg(2+).

The enzyme catalyses D-mannonate = 2-dehydro-3-deoxy-D-gluconate + H2O. Has low D-mannonate dehydratase activity (in vitro), suggesting that this is not a physiological substrate and that it has no significant role in D-mannonate degradation in vivo. Has no detectable activity with a panel of 70 other acid sugars (in vitro). This is D-galactonate dehydratase family member Ent638_1932 from Enterobacter sp. (strain 638).